A 467-amino-acid polypeptide reads, in one-letter code: Light-independent protochlorophyllide reductase subunit N (467 aa).

Positions 22, 47, and 107 each coordinate [4Fe-4S] cluster.

The protein belongs to the BchN/ChlN family. Protochlorophyllide reductase is composed of three subunits; ChlL, ChlN and ChlB. Forms a heterotetramer of two ChlB and two ChlN subunits. [4Fe-4S] cluster serves as cofactor.

The protein resides in the plastid. The protein localises to the chloroplast. It catalyses the reaction chlorophyllide a + oxidized 2[4Fe-4S]-[ferredoxin] + 2 ADP + 2 phosphate = protochlorophyllide a + reduced 2[4Fe-4S]-[ferredoxin] + 2 ATP + 2 H2O. It functions in the pathway porphyrin-containing compound metabolism; chlorophyll biosynthesis (light-independent). Its function is as follows. Component of the dark-operative protochlorophyllide reductase (DPOR) that uses Mg-ATP and reduced ferredoxin to reduce ring D of protochlorophyllide (Pchlide) to form chlorophyllide a (Chlide). This reaction is light-independent. The NB-protein (ChlN-ChlB) is the catalytic component of the complex. The polypeptide is Light-independent protochlorophyllide reductase subunit N (Chara vulgaris (Common stonewort)).